A 287-amino-acid polypeptide reads, in one-letter code: Bifunctional protein FolD (287 aa).

NADP(+) contacts are provided by residues Gly-164–Ser-166, Ser-189, and Ile-230.

The protein belongs to the tetrahydrofolate dehydrogenase/cyclohydrolase family. In terms of assembly, homodimer.

The catalysed reaction is (6R)-5,10-methylene-5,6,7,8-tetrahydrofolate + NADP(+) = (6R)-5,10-methenyltetrahydrofolate + NADPH. The enzyme catalyses (6R)-5,10-methenyltetrahydrofolate + H2O = (6R)-10-formyltetrahydrofolate + H(+). It participates in one-carbon metabolism; tetrahydrofolate interconversion. Catalyzes the oxidation of 5,10-methylenetetrahydrofolate to 5,10-methenyltetrahydrofolate and then the hydrolysis of 5,10-methenyltetrahydrofolate to 10-formyltetrahydrofolate. The protein is Bifunctional protein FolD of Aliarcobacter butzleri (strain RM4018) (Arcobacter butzleri).